A 390-amino-acid chain; its full sequence is NADH-quinone oxidoreductase subunit D (390 aa).

It belongs to the complex I 49 kDa subunit family. NDH-1 is composed of 14 different subunits. Subunits NuoB, C, D, E, F, and G constitute the peripheral sector of the complex.

It localises to the cell inner membrane. It catalyses the reaction a quinone + NADH + 5 H(+)(in) = a quinol + NAD(+) + 4 H(+)(out). NDH-1 shuttles electrons from NADH, via FMN and iron-sulfur (Fe-S) centers, to quinones in the respiratory chain. The immediate electron acceptor for the enzyme in this species is believed to be ubiquinone. Couples the redox reaction to proton translocation (for every two electrons transferred, four hydrogen ions are translocated across the cytoplasmic membrane), and thus conserves the redox energy in a proton gradient. The chain is NADH-quinone oxidoreductase subunit D from Trichlorobacter lovleyi (strain ATCC BAA-1151 / DSM 17278 / SZ) (Geobacter lovleyi).